A 222-amino-acid chain; its full sequence is Extracellular protein ARB_03106 (222 aa).

The signal sequence occupies residues 1-18 (MRLHSVLAVATAVGCAVA). Residues Asn113 and Asn126 are each glycosylated (N-linked (GlcNAc...) asparagine).

The protein resides in the secreted. The polypeptide is Extracellular protein ARB_03106 (Arthroderma benhamiae (strain ATCC MYA-4681 / CBS 112371) (Trichophyton mentagrophytes)).